Reading from the N-terminus, the 105-residue chain is Small ribosomal subunit protein uS10 (105 aa).

It belongs to the universal ribosomal protein uS10 family. In terms of assembly, part of the 30S ribosomal subunit.

Its function is as follows. Involved in the binding of tRNA to the ribosomes. The protein is Small ribosomal subunit protein uS10 of Chlamydia abortus (strain DSM 27085 / S26/3) (Chlamydophila abortus).